Here is a 557-residue protein sequence, read N- to C-terminus: Urease subunit alpha (557 aa).

The Urease domain maps to 130 to 557 (GFIDTHIHWV…LPLTQLYFIY (428 aa)). Residues His135, His137, and Lys217 each contribute to the Ni(2+) site. Lys217 bears the N6-carboxylysine mark. His219 is a substrate binding site. Ni(2+)-binding residues include His246 and His272. The active-site Proton donor is the His320. Residue Asp360 coordinates Ni(2+).

It belongs to the metallo-dependent hydrolases superfamily. Urease alpha subunit family. Heterohexamer of 3 UreC (alpha) and 3 UreAB (gamma/beta) subunits. Ni cation serves as cofactor. In terms of processing, carboxylation allows a single lysine to coordinate two nickel ions.

Its subcellular location is the cytoplasm. The catalysed reaction is urea + 2 H2O + H(+) = hydrogencarbonate + 2 NH4(+). It functions in the pathway nitrogen metabolism; urea degradation; CO(2) and NH(3) from urea (urease route): step 1/1. In Sulfurisphaera tokodaii (strain DSM 16993 / JCM 10545 / NBRC 100140 / 7) (Sulfolobus tokodaii), this protein is Urease subunit alpha.